The sequence spans 299 residues: Regucalcin (299 aa).

Residue Glu18 participates in a divalent metal cation binding. Arg101, Asn103, and Glu121 together coordinate substrate. Lys144 carries the post-translational modification N6-succinyllysine. Asn154 and Asp204 together coordinate a divalent metal cation. Asp204 acts as the Proton donor/acceptor in catalysis. N6-succinyllysine is present on residues Lys244 and Lys253. Position 268 is a phosphoserine (Ser268).

This sequence belongs to the SMP-30/CGR1 family. As to quaternary structure, monomer. The cofactor is Zn(2+). Mn(2+) is required as a cofactor. Ca(2+) serves as cofactor. Requires Mg(2+) as cofactor. It depends on Co(2+) as a cofactor. The N-terminus is blocked. In terms of tissue distribution, detected in liver (at protein level). Hepatocytes and renal proximal tubular epithelium.

The protein resides in the cytoplasm. It carries out the reaction D-glucono-1,5-lactone + H2O = D-gluconate + H(+). The protein operates within cofactor biosynthesis; L-ascorbate biosynthesis via UDP-alpha-D-glucuronate pathway; L-ascorbate from UDP-alpha-D-glucuronate: step 3/4. In terms of biological role, gluconolactonase with low activity towards other sugar lactones, including gulonolactone and galactonolactone. Catalyzes a key step in ascorbic acid (vitamin C) biosynthesis. Can also hydrolyze diisopropyl phosphorofluoridate and phenylacetate (in vitro). Calcium-binding protein. Modulates Ca(2+) signaling, and Ca(2+)-dependent cellular processes and enzyme activities. The protein is Regucalcin (Rgn) of Rattus norvegicus (Rat).